Reading from the N-terminus, the 139-residue chain is Putative pre-16S rRNA nuclease (139 aa).

Belongs to the YqgF nuclease family.

The protein resides in the cytoplasm. Could be a nuclease involved in processing of the 5'-end of pre-16S rRNA. This chain is Putative pre-16S rRNA nuclease, found in Streptococcus sanguinis (strain SK36).